Consider the following 241-residue polypeptide: Small ribosomal subunit protein uS2 (241 aa).

Belongs to the universal ribosomal protein uS2 family.

In Sodalis glossinidius (strain morsitans), this protein is Small ribosomal subunit protein uS2.